We begin with the raw amino-acid sequence, 240 residues long: 2-C-methyl-D-erythritol 2,4-cyclodiphosphate synthase, apicoplast (240 aa).

A divalent metal cation contacts are provided by Asp-71 and His-73. 4-CDP-2-C-methyl-D-erythritol 2-phosphate-binding positions include 71 to 73 (DIH) and 115 to 116 (HS). His-123 serves as a coordination point for a divalent metal cation. 4-CDP-2-C-methyl-D-erythritol 2-phosphate is bound by residues 137-139 (DIG), 142-146 (FPDKD), 181-187 (AQVPKIS), and 212-214 (GKT).

This sequence belongs to the IspF family. Homotrimer. A divalent metal cation serves as cofactor.

The protein localises to the plastid. Its subcellular location is the apicoplast. The catalysed reaction is 4-CDP-2-C-methyl-D-erythritol 2-phosphate = 2-C-methyl-D-erythritol 2,4-cyclic diphosphate + CMP. It participates in isoprenoid biosynthesis; isopentenyl diphosphate biosynthesis via DXP pathway; isopentenyl diphosphate from 1-deoxy-D-xylulose 5-phosphate: step 4/6. Its function is as follows. In the mevalonate-independent isoprenoid biosynthetic pathway, converts 4-diphosphocytidyl-2C-methyl-D-erythritol 2-phosphate into 2C-methyl-D-erythritol 2,4-cyclodiphosphate and CMP. This Plasmodium falciparum (isolate 3D7) protein is 2-C-methyl-D-erythritol 2,4-cyclodiphosphate synthase, apicoplast.